We begin with the raw amino-acid sequence, 192 residues long: Peptidyl-tRNA hydrolase (192 aa).

Tyr-16 provides a ligand contact to tRNA. Catalysis depends on His-21, which acts as the Proton acceptor. TRNA is bound by residues Tyr-66 and Asn-68.

The protein belongs to the PTH family. As to quaternary structure, monomer.

The protein resides in the cytoplasm. It catalyses the reaction an N-acyl-L-alpha-aminoacyl-tRNA + H2O = an N-acyl-L-amino acid + a tRNA + H(+). Functionally, hydrolyzes ribosome-free peptidyl-tRNAs (with 1 or more amino acids incorporated), which drop off the ribosome during protein synthesis, or as a result of ribosome stalling. In terms of biological role, catalyzes the release of premature peptidyl moieties from peptidyl-tRNA molecules trapped in stalled 50S ribosomal subunits, and thus maintains levels of free tRNAs and 50S ribosomes. In Aquifex aeolicus (strain VF5), this protein is Peptidyl-tRNA hydrolase.